The primary structure comprises 692 residues: Elongation factor G (692 aa).

Positions 8-282 constitute a tr-type G domain; it reads AKTRNIGIMA…AVIAYLPSPL (275 aa). Residues 17-24, 81-85, and 135-138 contribute to the GTP site; these read AHVDAGKT, DTPGH, and NKMD.

This sequence belongs to the TRAFAC class translation factor GTPase superfamily. Classic translation factor GTPase family. EF-G/EF-2 subfamily.

It is found in the cytoplasm. Functionally, catalyzes the GTP-dependent ribosomal translocation step during translation elongation. During this step, the ribosome changes from the pre-translocational (PRE) to the post-translocational (POST) state as the newly formed A-site-bound peptidyl-tRNA and P-site-bound deacylated tRNA move to the P and E sites, respectively. Catalyzes the coordinated movement of the two tRNA molecules, the mRNA and conformational changes in the ribosome. The sequence is that of Elongation factor G from Streptococcus equi subsp. zooepidemicus (strain MGCS10565).